Reading from the N-terminus, the 548-residue chain is Isocitrate dehydrogenase [NAD(+)] 1, mitochondrial (548 aa).

The transit peptide at methionine 1–alanine 53 directs the protein to the mitochondrion. Residues threonine 132–threonine 134 and asparagine 153 contribute to the NAD(+) site. D-threo-isocitrate is bound by residues serine 151 to arginine 157, arginine 187, tyrosine 194, lysine 266, aspartate 311, and aspartate 335. Aspartate 311, aspartate 335, and aspartate 339 together coordinate Mg(2+). NAD(+) contacts are provided by residues histidine 372–aspartate 377 and asparagine 391. One can recognise an EF-hand domain in the interval isoleucine 499 to alanine 534. The Ca(2+) site is built by aspartate 512, asparagine 514, aspartate 516, phenylalanine 518, and glutamate 523.

It belongs to the isocitrate and isopropylmalate dehydrogenases family. Homodimer. Mg(2+) is required as a cofactor. The cofactor is Mn(2+).

The protein resides in the mitochondrion. The enzyme catalyses D-threo-isocitrate + NAD(+) = 2-oxoglutarate + CO2 + NADH. With respect to regulation, the homodimer exhibits allosteric regulation by isocitrate. Activated by Mn(2+) and Mg(2+). No activation by Na(+), K(+) or Li(+). Inhibited by Co(2+), Cu(2+) and Ni(2+), but not with Ca(2+) in the presence of Mn(2+) or Mg(2+). Competitively inhibited by NADH, but no effect on activity by 1.0 mM citrate. Strongly inhibited by excess ATP, ADP, AMP and alpha-ketoglutarate. Functionally, performs an essential role in the oxidative function of the tricarboxylic acid cycle and respiration. Catalyzes the decarboxylation of isocitrate to produce 2-oxoglutarate and generate NADH to provide electrons for energy production. No activity with NADP(+). The sequence is that of Isocitrate dehydrogenase [NAD(+)] 1, mitochondrial from Phaeodactylum tricornutum (strain CCAP 1055/1).